A 409-amino-acid polypeptide reads, in one-letter code: Serine/threonine transporter SstT (409 aa).

Transmembrane regions (helical) follow at residues 15–35 (LSLVTQIVIGLIAGIALALLA), 49–69 (FVSALKAVAPILVFVLVMASI), 82–102 (PILVLYLLGTFAAAVVAVIAS), 142–162 (ALMNANFIGILAWAIGMGVAI), 193–213 (LGIFGLVASTLATSGFNALLG), 218–238 (LAVLIGCMLFVALVMNPLIVF), 301–321 (GAAITITVLTLAAVHTLGIAV), 331–351 (VVAAICACGASGVAGGSLLLI), and 357–377 (LFGIPSEIAMQVVAVGFIIGV).

Belongs to the dicarboxylate/amino acid:cation symporter (DAACS) (TC 2.A.23) family.

It is found in the cell inner membrane. The catalysed reaction is L-serine(in) + Na(+)(in) = L-serine(out) + Na(+)(out). It catalyses the reaction L-threonine(in) + Na(+)(in) = L-threonine(out) + Na(+)(out). Its function is as follows. Involved in the import of serine and threonine into the cell, with the concomitant import of sodium (symport system). The polypeptide is Serine/threonine transporter SstT (Pseudomonas fluorescens (strain ATCC BAA-477 / NRRL B-23932 / Pf-5)).